Reading from the N-terminus, the 566-residue chain is MOB kinase activator-like 2 (566 aa).

Disordered regions lie at residues 28-57 (ADAT…SSLS) and 74-118 (GRAV…GAQA). A compositionally biased stretch (low complexity) spans 35–57 (SSTAPQTPTASTPRPSSSHSSLS). Gly residues predominate over residues 85 to 115 (QNGGKGNASGAGGGAGGGGAGGASGGTGGTG). 4 residues coordinate Zn(2+): cysteine 209, cysteine 214, histidine 289, and histidine 294. 2 disordered regions span residues 346–407 (GGCQ…SASA) and 498–541 (FSNN…QCNA). The span at 367–388 (LQHQSLQQQQQHHNSSSNSTSS) shows a compositional bias: low complexity. Residues 394–407 (VNSQSNNGSTSASA) are compositionally biased toward polar residues. Residues 498-507 (FSNNNNNNHN) show a composition bias toward low complexity. Residues 508–526 (LNHHHHHHHHHGHHGHHHA) show a composition bias toward basic residues.

It belongs to the MOB1/phocein family. As to quaternary structure, interacts with and activates trc, also interacts with wts.

Its subcellular location is the cytoplasm. It localises to the nucleus. Functionally, required for the normal morphogenesis of a variety of polarized outgrowths including epidermal hairs, bristles, arista laterals, and dendrites. The sequence is that of MOB kinase activator-like 2 (Mob2) from Drosophila melanogaster (Fruit fly).